Here is a 235-residue protein sequence, read N- to C-terminus: Hydroxyacylglutathione hydrolase (235 aa).

Residues histidine 53, histidine 55, aspartate 57, histidine 58, histidine 109, aspartate 127, and histidine 165 each coordinate Zn(2+).

Belongs to the metallo-beta-lactamase superfamily. Glyoxalase II family. In terms of assembly, monomer. It depends on Zn(2+) as a cofactor.

The enzyme catalyses an S-(2-hydroxyacyl)glutathione + H2O = a 2-hydroxy carboxylate + glutathione + H(+). Its pathway is secondary metabolite metabolism; methylglyoxal degradation; (R)-lactate from methylglyoxal: step 2/2. Thiolesterase that catalyzes the hydrolysis of S-D-lactoyl-glutathione to form glutathione and D-lactic acid. In Actinobacillus pleuropneumoniae serotype 7 (strain AP76), this protein is Hydroxyacylglutathione hydrolase.